A 427-amino-acid chain; its full sequence is Glutamate-1-semialdehyde 2,1-aminomutase (427 aa).

Lysine 264 is subject to N6-(pyridoxal phosphate)lysine.

Belongs to the class-III pyridoxal-phosphate-dependent aminotransferase family. HemL subfamily. Homodimer. Pyridoxal 5'-phosphate serves as cofactor.

Its subcellular location is the cytoplasm. It carries out the reaction (S)-4-amino-5-oxopentanoate = 5-aminolevulinate. The protein operates within porphyrin-containing compound metabolism; protoporphyrin-IX biosynthesis; 5-aminolevulinate from L-glutamyl-tRNA(Glu): step 2/2. The chain is Glutamate-1-semialdehyde 2,1-aminomutase from Clostridium botulinum (strain Eklund 17B / Type B).